Consider the following 265-residue polypeptide: H-2 class II histocompatibility antigen, A-D beta chain (265 aa).

A signal peptide spans 1 to 27 (MALQIPSLLLSAAVVVLMVLSSPRTEG). A beta-1 region spans residues 28–122 (GNSERHFVVQ…PETSTSLRRL (95 aa)). Over 28-226 (GNSERHFVVQ…RAQSESARSK (199 aa)) the chain is Extracellular. 2 cysteine pairs are disulfide-bonded: C42/C106 and C145/C201. A glycan (N-linked (GlcNAc...) asparagine) is linked at N46. The beta-2 stretch occupies residues 123-216 (EQPNVAISLS…SLKSPITVEW (94 aa)). Positions 125-213 (PNVAISLSRT…EHPSLKSPIT (89 aa)) constitute an Ig-like C1-type domain. The tract at residues 217–226 (RAQSESARSK) is connecting peptide. A helical membrane pass occupies residues 227–247 (MLSGIGGCVLGVIFLGLGLFI). The Cytoplasmic portion of the chain corresponds to 248–265 (RHRSQKGPRGPPPAGLLQ).

It belongs to the MHC class II family. Ubiquitinated in immature dendritic cells leading to down-regulation of MHC class II.

The protein localises to the membrane. The polypeptide is H-2 class II histocompatibility antigen, A-D beta chain (H2-Ab1) (Mus musculus (Mouse)).